Reading from the N-terminus, the 162-residue chain is Large ribosomal subunit protein uL10 (162 aa).

It belongs to the universal ribosomal protein uL10 family. Part of the ribosomal stalk of the 50S ribosomal subunit. The N-terminus interacts with L11 and the large rRNA to form the base of the stalk. The C-terminus forms an elongated spine to which L12 dimers bind in a sequential fashion forming a multimeric L10(L12)X complex.

Forms part of the ribosomal stalk, playing a central role in the interaction of the ribosome with GTP-bound translation factors. The polypeptide is Large ribosomal subunit protein uL10 (Borreliella afzelii (strain PKo) (Borrelia afzelii)).